Reading from the N-terminus, the 384-residue chain is Monomeric sarcosine oxidase (384 aa).

Position 6–36 (6–36) interacts with FAD; sequence DVIVIGLGGMGSAAAHHLSARGARVLGLEKF. S-8alpha-FAD cysteine is present on cysteine 315.

This sequence belongs to the MSOX/MTOX family. MSOX subfamily. Monomer. Requires FAD as cofactor.

The protein localises to the cytoplasm. It catalyses the reaction sarcosine + O2 + H2O = formaldehyde + glycine + H2O2. Functionally, catalyzes the oxidative demethylation of sarcosine. This Streptomyces avermitilis (strain ATCC 31267 / DSM 46492 / JCM 5070 / NBRC 14893 / NCIMB 12804 / NRRL 8165 / MA-4680) protein is Monomeric sarcosine oxidase.